Consider the following 204-residue polypeptide: Proteasome subunit beta type-3 (204 aa).

This sequence belongs to the peptidase T1B family. The 26S proteasome consists of a 20S proteasome core and two 19S regulatory subunits. The 20S proteasome core is composed of 28 subunits that are arranged in four stacked rings, resulting in a barrel-shaped structure. The two end rings are each formed by seven alpha subunits, and the two central rings are each formed by seven beta subunits. The catalytic chamber with the active sites is on the inside of the barrel.

The protein localises to the cytoplasm. It is found in the nucleus. Its function is as follows. Non-catalytic component of the proteasome, a multicatalytic proteinase complex which is characterized by its ability to cleave peptides with Arg, Phe, Tyr, Leu, and Glu adjacent to the leaving group at neutral or slightly basic pH. The proteasome has an ATP-dependent proteolytic activity. The protein is Proteasome subunit beta type-3 (PBC1) of Oryza sativa subsp. japonica (Rice).